The primary structure comprises 362 residues: Hydroxycarboxylate dehydrogenase A (362 aa).

Residues aspartate 173, histidine 257, and histidine 274 each contribute to the Zn(2+) site.

Belongs to the iron-containing alcohol dehydrogenase family. Zn(2+) is required as a cofactor.

The catalysed reaction is 2-hydroxybutanoate + NADP(+) = 2-oxobutanoate + NADPH + H(+). It catalyses the reaction 2-hydroxyglutarate + NADP(+) = 2-oxoglutarate + NADPH + H(+). Catalyzes the NADPH-dependent reduction of 2-oxoglutarate and 2-oxobutanoate, leading to the respective 2-hydroxycarboxylate. Cannot use NADH instead of NADPH as a redox partner. Do not catalyze the reverse reactions. The chain is Hydroxycarboxylate dehydrogenase A from Escherichia coli (strain K12).